The following is a 124-amino-acid chain: Putative transmembrane protein FLJ36131 (124 aa).

Topologically, residues Met-1–Tyr-2 are cytoplasmic. Residues Val-3–Ile-23 form a helical membrane-spanning segment. Residues Val-24–Ser-124 are Extracellular-facing. Asn-41 is a glycosylation site (N-linked (GlcNAc...) asparagine).

It is found in the membrane. This is Putative transmembrane protein FLJ36131 from Homo sapiens (Human).